The primary structure comprises 256 residues: Extracellular serine-rich protein ARB_03024 (256 aa).

The signal sequence occupies residues 1–19 (MVATKSVLSAVALAGVAAA). The interval 135-235 (KIVPQSGSPT…TPTASPGAAA (101 aa)) is disordered. Gly residues predominate over residues 149–159 (GTLGGSGGSGG). 2 stretches are compositionally biased toward low complexity: residues 160–204 (SSSS…QSTP) and 215–235 (PSATGSGSHSSTPTASPGAAA). Ala-233 carries the GPI-anchor amidated alanine lipid modification. Positions 234 to 256 (AAGLKGSAVLAGVVALGAWIGLL) are cleaved as a propeptide — removed in mature form.

It localises to the cell membrane. The protein localises to the secreted. The chain is Extracellular serine-rich protein ARB_03024 from Arthroderma benhamiae (strain ATCC MYA-4681 / CBS 112371) (Trichophyton mentagrophytes).